The chain runs to 293 residues: Small ribosomal subunit protein uS5 (293 aa).

A disordered region spans residues 1–56; it reads MADDAGAAGGPGGPGGPGMGGRGGFRGGFGSGVRGRGRGRGRGRGRGRGARGGKAE. Ala-2 carries the post-translational modification N-acetylalanine. The segment covering 7–34 has biased composition (gly residues); the sequence is AAGGPGGPGGPGMGGRGGFRGGFGSGVR. Residues 35–51 show a composition bias toward basic residues; that stretch reads GRGRGRGRGRGRGRGAR. Residues Lys-54 and Lys-58 each participate in a glycyl lysine isopeptide (Lys-Gly) (interchain with G-Cter in ubiquitin) cross-link. Positions 102–165 constitute an S5 DRBM domain; it reads LKDEVLKIMP…ILAKLSIVPV (64 aa). Thr-252 bears the Phosphothreonine mark. Lys-263 carries the post-translational modification N6-acetyllysine. At Ser-264 the chain carries Phosphoserine. Thr-270 carries the phosphothreonine modification. Lys-275 is subject to N6-acetyllysine; alternate. Lys-275 is covalently cross-linked (Glycyl lysine isopeptide (Lys-Gly) (interchain with G-Cter in SUMO1); alternate). Lys-275 is covalently cross-linked (Glycyl lysine isopeptide (Lys-Gly) (interchain with G-Cter in SUMO2); alternate). Lys-275 is covalently cross-linked (Glycyl lysine isopeptide (Lys-Gly) (interchain with G-Cter in ubiquitin); alternate). Ser-281 bears the Phosphoserine mark.

Belongs to the universal ribosomal protein uS5 family. As to quaternary structure, component of the small ribosomal subunit. Interacts with zinc finger protein ZNF277 (via zinc-finger domains); the interaction is direct; the interaction is extra-ribosomal. Interaction with ZNF277 competes with the binding of RPS2 to protein arginine methyltransferase PRMT3. Post-translationally, citrullinated by PADI4 in the Arg/Gly-rich region. In terms of processing, asymmetric arginine dimethylation by PRMT3 occurs at multiple sites in the Arg/Gly-rich region. Monoubiquitinated at Lys-54 and Lys-58 by RNF10 when a ribosome has stalled during translation, leading to its degradation by the proteasome. Deubiquitinated at Lys-54 and Lys-58 by USP10, preventing degradation by the proteasome and promoting 40S ribosome subunit recycling following ribosome dissociation.

It localises to the cytoplasm. The protein resides in the nucleus. It is found in the nucleolus. Its function is as follows. Component of the ribosome, a large ribonucleoprotein complex responsible for the synthesis of proteins in the cell. The small ribosomal subunit (SSU) binds messenger RNAs (mRNAs) and translates the encoded message by selecting cognate aminoacyl-transfer RNA (tRNA) molecules. The large subunit (LSU) contains the ribosomal catalytic site termed the peptidyl transferase center (PTC), which catalyzes the formation of peptide bonds, thereby polymerizing the amino acids delivered by tRNAs into a polypeptide chain. The nascent polypeptides leave the ribosome through a tunnel in the LSU and interact with protein factors that function in enzymatic processing, targeting, and the membrane insertion of nascent chains at the exit of the ribosomal tunnel. Plays a role in the assembly and function of the 40S ribosomal subunit. Mutations in this protein affects the control of translational fidelity. Involved in nucleolar processing of pre-18S ribosomal RNA and ribosome assembly. The sequence is that of Small ribosomal subunit protein uS5 (RPS2) from Bos taurus (Bovine).